Consider the following 407-residue polypeptide: Probable beta-1,3-galactosyltransferase 4 (407 aa).

A helical; Signal-anchor for type II membrane protein membrane pass occupies residues 23–39 (WTLFLCIGFFCAGILFS).

It belongs to the glycosyltransferase 31 family. Requires Mn(2+) as cofactor.

It is found in the golgi apparatus membrane. Its pathway is protein modification; protein glycosylation. Beta-1,3-galactosyltransferase that transfers galactose from UDP-galactose to substrates with a terminal glycosyl residue. The sequence is that of Probable beta-1,3-galactosyltransferase 4 (B3GALT4) from Arabidopsis thaliana (Mouse-ear cress).